A 438-amino-acid polypeptide reads, in one-letter code: LIM domain-containing protein C4F6.12 (438 aa).

2 disordered regions span residues 1–37 (MHSP…NNLV) and 49–78 (TGGR…TIKQ). Residues 24–37 (SPVSTNGSPLNNLV) show a composition bias toward polar residues. Phosphoserine occurs at positions 67 and 96. 3 consecutive LIM zinc-binding domains span residues 256-316 (KSCH…QFSP), 318-375 (CKHC…NKYA), and 376-435 (VKCK…SVKF).

The protein is LIM domain-containing protein C4F6.12 of Schizosaccharomyces pombe (strain 972 / ATCC 24843) (Fission yeast).